Here is a 122-residue protein sequence, read N- to C-terminus: Large ribosomal subunit protein uL14 (122 aa).

Belongs to the universal ribosomal protein uL14 family. In terms of assembly, part of the 50S ribosomal subunit. Forms a cluster with proteins L3 and L19. In the 70S ribosome, L14 and L19 interact and together make contacts with the 16S rRNA in bridges B5 and B8.

Functionally, binds to 23S rRNA. Forms part of two intersubunit bridges in the 70S ribosome. This chain is Large ribosomal subunit protein uL14, found in Thermosipho melanesiensis (strain DSM 12029 / CIP 104789 / BI429).